The following is a 117-amino-acid chain: Fluoride-specific ion channel FluC 2 (117 aa).

2 helical membrane-spanning segments follow: residues 1–21 and 46–66; these read MISIILVMIGGGFGAIARSAI and FLIGLTIGLSISISWFPAFFV. Na(+) contacts are provided by G71 and T74. Residues 95–115 form a helical membrane-spanning segment; sequence LFLNYSLLQFIIGFIACYIGY.

It belongs to the fluoride channel Fluc/FEX (TC 1.A.43) family.

Its subcellular location is the cell membrane. The catalysed reaction is fluoride(in) = fluoride(out). Na(+) is not transported, but it plays an essential structural role and its presence is essential for fluoride channel function. Its function is as follows. Fluoride-specific ion channel. Important for reducing fluoride concentration in the cell, thus reducing its toxicity. The sequence is that of Fluoride-specific ion channel FluC 2 from Staphylococcus aureus (strain Mu50 / ATCC 700699).